The sequence spans 346 residues: Flap endonuclease 1 (346 aa).

Residues 1–100 (MGVDIKELVE…KELERRYQIK (100 aa)) are N-domain. Asp29, Asp82, Glu154, Glu156, Asp175, Asp177, and Asp238 together coordinate Mg(2+). An I-domain region spans residues 118 to 260 (EARIYAQQTS…KALKLVKELK (143 aa)). The tract at residues 336 to 344 (KQQSLESWF) is interaction with PCNA.

Belongs to the XPG/RAD2 endonuclease family. FEN1 subfamily. Interacts with PCNA. PCNA stimulates the nuclease activity without altering cleavage specificity. Mg(2+) serves as cofactor.

Its function is as follows. Structure-specific nuclease with 5'-flap endonuclease and 5'-3' exonuclease activities involved in DNA replication and repair. During DNA replication, cleaves the 5'-overhanging flap structure that is generated by displacement synthesis when DNA polymerase encounters the 5'-end of a downstream Okazaki fragment. Binds the unpaired 3'-DNA end and kinks the DNA to facilitate 5' cleavage specificity. Cleaves one nucleotide into the double-stranded DNA from the junction in flap DNA, leaving a nick for ligation. Also involved in the base excision repair (BER) pathway. Acts as a genome stabilization factor that prevents flaps from equilibrating into structures that lead to duplications and deletions. Also possesses 5'-3' exonuclease activity on nicked or gapped double-stranded DNA. This chain is Flap endonuclease 1, found in Thermofilum pendens (strain DSM 2475 / Hrk 5).